Consider the following 368-residue polypeptide: Core histone macro-H2A.1 (368 aa).

In terms of domain architecture, Histone H2A spans S2–K117. An N6-lactoyllysine; alternate mark is found at K7 and K9. Residue K18 is modified to N6-methyllysine. The residue at position 116 (K116) is an N6-acetyllysine; alternate. K116 participates in a covalent cross-link: Glycyl lysine isopeptide (Lys-Gly) (interchain with G-Cter in ubiquitin); alternate. K117 is covalently cross-linked (Glycyl lysine isopeptide (Lys-Gly) (interchain with G-Cter in ubiquitin)). K123 carries the post-translational modification N6-acetyllysine; alternate. An N6,N6-dimethyllysine; alternate modification is found at K123. A Glycyl lysine isopeptide (Lys-Gly) (interchain with G-Cter in SUMO2); alternate cross-link involves residue K123. Residues I128–T179 are disordered. T129 is modified (phosphothreonine). Basic residues predominate over residues P144 to K159. A Glycyl lysine isopeptide (Lys-Gly) (interchain with G-Cter in SUMO2) cross-link involves residue K166. Residues S169 and S172 each carry the phosphoserine modification. The region spanning T183–D366 is the Macro domain. K188 is covalently cross-linked (Glycyl lysine isopeptide (Lys-Gly) (interchain with G-Cter in SUMO2)). D202, I203, V225, S274, G311, S312, G313, and N315 together coordinate a glycoprotein. K319 participates in a covalent cross-link: Glycyl lysine isopeptide (Lys-Gly) (interchain with G-Cter in SUMO2).

It belongs to the histone H2A family. As to quaternary structure, the nucleosome is a histone octamer containing two molecules each of H2A, H2B, H3 and H4 assembled in one H3-H4 heterotetramer and two H2A-H2B heterodimers. Interacts with HDAC1 and HDAC2. Interacts with SPOP. Part of a complex consisting of MACROH2A1, CUL3 and SPOP. Interacts with PARP1. In terms of processing, monoubiquitinated at either Lys-116 or Lys-117. May also be polyubiquitinated. Ubiquitination is mediated by the CUL3/SPOP E3 complex and does not promote proteasomal degradation. Instead, it is required for enrichment in inactive X chromosome chromatin. Present only in liver and brain (at protein level). As to expression, present in brain, thymus, testis, liver and kidney (at protein level).

Its subcellular location is the nucleus. It is found in the chromosome. Variant histone H2A which replaces conventional H2A in a subset of nucleosomes where it represses transcription. Nucleosomes wrap and compact DNA into chromatin, limiting DNA accessibility to the cellular machineries which require DNA as a template. Histones thereby play a central role in transcription regulation, DNA repair, DNA replication and chromosomal stability. DNA accessibility is regulated via a complex set of post-translational modifications of histones, also called histone code, and nucleosome remodeling. Involved in stable X chromosome inactivation. Inhibits the binding of transcription factors, including NF-kappa-B, and interferes with the activity of remodeling SWI/SNF complexes. Inhibits histone acetylation by EP300 and recruits class I HDACs, which induces a hypoacetylated state of chromatin. Its function is as follows. Isoform that specifically binds poly-ADP-ribose and O-acetyl-ADP-ribose and plays a key role in NAD(+) metabolism. Able to bind to the ends of poly-ADP-ribose chains created by PARP1 and cap them. This prevents PARP1 from further addition of ADP-ribose and thus limits the consumption of nuclear NAD(+), allowing the cell to maintain proper NAD(+) levels in both the nucleus and the mitochondria to promote proper mitochondrial respiration. Increases the expression of genes involved in redox metabolism, including SOD3. In terms of biological role, in contrast to isoform 1, does not bind poly-ADP-ribose. Represses SOD3 gene expression. The protein is Core histone macro-H2A.1 of Rattus norvegicus (Rat).